A 209-amino-acid polypeptide reads, in one-letter code: FMN-dependent NADH:quinone oxidoreductase (209 aa).

FMN is bound by residues Ser9, Ser19–Ser21, and Thr143–Gly146.

The protein belongs to the azoreductase type 1 family. Homodimer. FMN serves as cofactor.

The enzyme catalyses 2 a quinone + NADH + H(+) = 2 a 1,4-benzosemiquinone + NAD(+). The catalysed reaction is N,N-dimethyl-1,4-phenylenediamine + anthranilate + 2 NAD(+) = 2-(4-dimethylaminophenyl)diazenylbenzoate + 2 NADH + 2 H(+). Functionally, quinone reductase that provides resistance to thiol-specific stress caused by electrophilic quinones. Its function is as follows. Also exhibits azoreductase activity. Catalyzes the reductive cleavage of the azo bond in aromatic azo compounds to the corresponding amines. In Leptothrix cholodnii (strain ATCC 51168 / LMG 8142 / SP-6) (Leptothrix discophora (strain SP-6)), this protein is FMN-dependent NADH:quinone oxidoreductase.